The primary structure comprises 445 residues: Protein phosphatase 2C 53 (445 aa).

In terms of domain architecture, PPM-type phosphatase spans 124–435; sequence LWGLESICGR…DNITVVVIDL (312 aa). Residues Asp180, Gly181, Asp362, and Asp426 each contribute to the Mn(2+) site.

This sequence belongs to the PP2C family. In terms of assembly, interacts with PYL10, SAPK8 and SAPK10. Binding to PYL10 is dependent on the presence of abscisic acid (ABA). Interacts with PYL3, PYL5, PYL9 and PYL10. Binding to PYL9 and PYL10 is dependent on the presence of ABA. Mg(2+) is required as a cofactor. Requires Mn(2+) as cofactor. In terms of tissue distribution, expressed in leaf blades, leaf sheaths and lamina joints. Expressed at low levels in roots, stems, flowers and panicles.

The protein localises to the cytoplasm. Its subcellular location is the cytosol. It is found in the nucleus. It catalyses the reaction O-phospho-L-seryl-[protein] + H2O = L-seryl-[protein] + phosphate. The enzyme catalyses O-phospho-L-threonyl-[protein] + H2O = L-threonyl-[protein] + phosphate. Its activity is regulated as follows. Repressed by abscisic acid-bound PYL1. Protein phosphatase that acts as a negative regulator of abscisic acid (ABA) signaling. Involved in the regulation of root architecture development and drought resistance. Can dephosphorylate SAPK8 and SAPK10 in vitro. Together with PYL10, SAPK8 and SAPK10, may form an ABA signaling module involved in stress response. The chain is Protein phosphatase 2C 53 from Oryza sativa subsp. japonica (Rice).